A 171-amino-acid chain; its full sequence is UPF0398 protein STER_0279 (171 aa).

The protein belongs to the UPF0398 family.

This is UPF0398 protein STER_0279 from Streptococcus thermophilus (strain ATCC BAA-491 / LMD-9).